The primary structure comprises 234 residues: Phosphoribosylaminoimidazole-succinocarboxamide synthase (234 aa).

It belongs to the SAICAR synthetase family.

The catalysed reaction is 5-amino-1-(5-phospho-D-ribosyl)imidazole-4-carboxylate + L-aspartate + ATP = (2S)-2-[5-amino-1-(5-phospho-beta-D-ribosyl)imidazole-4-carboxamido]succinate + ADP + phosphate + 2 H(+). The protein operates within purine metabolism; IMP biosynthesis via de novo pathway; 5-amino-1-(5-phospho-D-ribosyl)imidazole-4-carboxamide from 5-amino-1-(5-phospho-D-ribosyl)imidazole-4-carboxylate: step 1/2. The protein is Phosphoribosylaminoimidazole-succinocarboxamide synthase of Streptococcus uberis (strain ATCC BAA-854 / 0140J).